The chain runs to 457 residues: Adenylosuccinate synthetase isozyme 2 (457 aa).

Residues 40-46 and 68-70 contribute to the GTP site; these read GDEGKGK and GHT. Catalysis depends on D41, which acts as the Proton acceptor. Mg(2+)-binding residues include D41 and G68. Substrate is bound at residue D41. IMP is bound by residues 41–44, 66–69, T163, R177, N256, T271, and R335; these read DEGK and NAGH. The active-site Proton donor is H69. 331 to 337 is a binding site for substrate; sequence VTTGRKR. GTP is bound by residues R337, 363–365, and 445–448; these read KLD and GVGK.

The protein belongs to the adenylosuccinate synthetase family. Homodimer. The cofactor is Mg(2+).

The protein localises to the cytoplasm. The protein resides in the mitochondrion. The catalysed reaction is IMP + L-aspartate + GTP = N(6)-(1,2-dicarboxyethyl)-AMP + GDP + phosphate + 2 H(+). The protein operates within purine metabolism; AMP biosynthesis via de novo pathway; AMP from IMP: step 1/2. Its activity is regulated as follows. Inhibited competitively by AMP and IMP and non-competitively by fructose 1,6-bisphosphate. Its function is as follows. Plays an important role in the de novo pathway and in the salvage pathway of purine nucleotide biosynthesis. Catalyzes the first committed step in the biosynthesis of AMP from IMP. This chain is Adenylosuccinate synthetase isozyme 2 (adss2), found in Xenopus laevis (African clawed frog).